The following is a 224-amino-acid chain: MNPTVAQQLSKTTRVEELAPGIEIIEECPRDIKALDGSPILLFGKWNVNDVVIRDPGLRRYMCLKPMLLPHTEGKYQNRKFGKAMIPIIERMMNQLMKPGRNAGKKQKAYKILKTAFDIIYVATGKNPVQVFVDAVVNVAPREEITRVIYGGIAYPVSVDVGPTRRLDLAIRWIAEGARACSFNNPRPIEECLANEIIAAANNDPASYALRRRDEMERVAATAR.

This sequence belongs to the universal ribosomal protein uS7 family. As to quaternary structure, part of the 30S ribosomal subunit.

In terms of biological role, one of the primary rRNA binding proteins, it binds directly to 16S rRNA where it nucleates assembly of the head domain of the 30S subunit. Is located at the subunit interface close to the decoding center. The sequence is that of Small ribosomal subunit protein uS7 from Caldivirga maquilingensis (strain ATCC 700844 / DSM 13496 / JCM 10307 / IC-167).